We begin with the raw amino-acid sequence, 395 residues long: MSRQSRSRFPSPTLITKSEDLAALCTTLRREPYVTIDTEFMRERTYWPELCVVQLGGADCVAVIDTLAPELDLAPVGELLADPAVIKVFHACRQDIEIFLLRFGSIPQPMFDTQVAAMVAGFGDQVGYDTLVSSLTGGHIDKAHRFSDWSRRPLSQAQIDYAAADVTHLRGVYETLRDRLEKEGRLAWVSEEMAVLNDPATYRTDPVTMWERLRPRTNNRRYLGLLRAICAWREVEAQRLNIPRQRLIKDESLLEIAATSPADAESLAQARGVGRGFAEGRSGATLLAAIAEARGLPDADLPAIPRSRESGARPSPALVSLLKVLLAAKSEQHNVAPKLLASSEDLDRLATEAEPDVPALTGWRRDVFGQDALALKNGEICLGVDGKQIKLITTG.

Residues 14-181 (LITKSEDLAA…VYETLRDRLE (168 aa)) form the 3'-5' exonuclease domain. One can recognise an HRDC domain in the interval 219–300 (NRRYLGLLRA…AEARGLPDAD (82 aa)).

It belongs to the RNase D family. It depends on a divalent metal cation as a cofactor.

The protein resides in the cytoplasm. The catalysed reaction is Exonucleolytic cleavage that removes extra residues from the 3'-terminus of tRNA to produce 5'-mononucleotides.. Its function is as follows. Exonuclease involved in the 3' processing of various precursor tRNAs. Initiates hydrolysis at the 3'-terminus of an RNA molecule and releases 5'-mononucleotides. The chain is Ribonuclease D from Granulibacter bethesdensis (strain ATCC BAA-1260 / CGDNIH1).